The following is a 454-amino-acid chain: GTPase Der (454 aa).

2 EngA-type G domains span residues 4-167 and 188-363; these read AIVA…SEDK and LQLA…ASWQ. Residues 10–17, 56–60, 121–124, 194–201, 241–245, and 306–309 contribute to the GTP site; these read GKPNVGKS, DTPGL, NKTE, GRPNCGKS, DTAGV, and NKCD. A KH-like domain is found at 364-450; it reads KRVTTGTLNQ…PVRLSFVKGK (87 aa).

This sequence belongs to the TRAFAC class TrmE-Era-EngA-EngB-Septin-like GTPase superfamily. EngA (Der) GTPase family. Associates with the 50S ribosomal subunit.

Its function is as follows. GTPase that plays an essential role in the late steps of ribosome biogenesis. This chain is GTPase Der, found in Orientia tsutsugamushi (strain Boryong) (Rickettsia tsutsugamushi).